The primary structure comprises 134 residues: ATP synthase epsilon chain, chloroplastic (134 aa).

The protein belongs to the ATPase epsilon chain family. In terms of assembly, F-type ATPases have 2 components, CF(1) - the catalytic core - and CF(0) - the membrane proton channel. CF(1) has five subunits: alpha(3), beta(3), gamma(1), delta(1), epsilon(1). CF(0) has three main subunits: a, b and c.

Its subcellular location is the plastid. It localises to the chloroplast thylakoid membrane. Functionally, produces ATP from ADP in the presence of a proton gradient across the membrane. This chain is ATP synthase epsilon chain, chloroplastic, found in Liriodendron tulipifera (Tuliptree).